Reading from the N-terminus, the 416-residue chain is 3-oxoacyl-[acyl-carrier-protein] synthase 2 (416 aa).

A Ketosynthase family 3 (KS3) domain is found at 6–414; it reads KKRVVVTGLG…GHNVTLAFKK (409 aa). Catalysis depends on for beta-ketoacyl synthase activity residues Cys-167, His-307, and His-344.

Belongs to the thiolase-like superfamily. Beta-ketoacyl-ACP synthases family. In terms of assembly, homodimer.

The catalysed reaction is a fatty acyl-[ACP] + malonyl-[ACP] + H(+) = a 3-oxoacyl-[ACP] + holo-[ACP] + CO2. It carries out the reaction (9Z)-hexadecenoyl-[ACP] + malonyl-[ACP] + H(+) = 3-oxo-(11Z)-octadecenoyl-[ACP] + holo-[ACP] + CO2. The protein operates within lipid metabolism; fatty acid biosynthesis. Its function is as follows. Involved in the type II fatty acid elongation cycle. Catalyzes the elongation of a wide range of acyl-ACP by the addition of two carbons from malonyl-ACP to an acyl acceptor. Can efficiently catalyze the conversion of palmitoleoyl-ACP (cis-hexadec-9-enoyl-ACP) to cis-vaccenoyl-ACP (cis-octadec-11-enoyl-ACP), an essential step in the thermal regulation of fatty acid composition. The polypeptide is 3-oxoacyl-[acyl-carrier-protein] synthase 2 (fabF) (Synechocystis sp. (strain ATCC 27184 / PCC 6803 / Kazusa)).